The sequence spans 249 residues: Protein YIPF4 (249 aa).

The span at 1-15 shows a compositional bias: pro residues; sequence MQPPGPQQPPPPPLF. Residues 1-40 are disordered; the sequence is MQPPGPQQPPPPPLFTPNNGDFTFVSSADAEDPSGSITTP. The Cytoplasmic portion of the chain corresponds to 1-116; it reads MQPPGPQQPP…LGFNRQVVRD (116 aa). Residues 16-26 are compositionally biased toward polar residues; it reads TPNNGDFTFVS. A helical transmembrane segment spans residues 117–137; sequence NPDFWGPLAVVLFFSMISLYG. Position 138 (Gln-138) is a topological domain, lumenal. A helical membrane pass occupies residues 139–159; it reads FKVVSWIITIWIFGSLTIFLL. The Cytoplasmic portion of the chain corresponds to 160-171; that stretch reads ARVLGGEVAYGQ. Residues 172-192 traverse the membrane as a helical segment; that stretch reads VLGVIGYSLLPLIVIAPVLLV. Over 193-200 the chain is Lumenal; sequence VGSFEVVS. The chain crosses the membrane as a helical span at residues 201–221; the sequence is TLIKLFGVFWAAYSAASLLVG. The Cytoplasmic portion of the chain corresponds to 222–228; that stretch reads EEFKTKK. Residues 229-249 traverse the membrane as a helical segment; sequence PLLIYPIFLLYIYFLSLYTGV.

This sequence belongs to the YIP1 family.

It localises to the golgi apparatus. The protein localises to the cis-Golgi network membrane. Functionally, involved in the maintenance of the Golgi structure. The chain is Protein YIPF4 (YIPF4) from Gallus gallus (Chicken).